A 1431-amino-acid polypeptide reads, in one-letter code: Collagen alpha-1(XVII) chain (1431 aa).

The Cytoplasmic portion of the chain corresponds to 1-468 (MDVTKKNKRD…AWCPCGSCCS (468 aa)). Residues 1-569 (MDVTKKNKRD…MTEQENGNLR (569 aa)) are nonhelical region (NC16). Disordered stretches follow at residues 25-155 (TRLT…PSTR), 167-188 (KGSR…PIPK), 304-324 (TAYG…TGVS), and 422-449 (SVEN…GGGG). The span at 60–74 (GSSGYINSSGSIRGN) shows a compositional bias: low complexity. 3 stretches are compositionally biased toward polar residues: residues 75–96 (ASTS…SPGS), 111–120 (EGSSSGNSSP), and 170–184 (RSAS…SSTL). Positions 146–231 (RLQSASPSTR…WSSTLPAGSS (86 aa)) are necessary for interaction with DST and for the recruitment of DST to hemidesmosome. Residues 430–449 (RGGGSGGGARGGGGSGGGGG) show a composition bias toward gly residues. The chain crosses the membrane as a helical; Signal-anchor for type II membrane protein span at residues 469–489 (WWKWLLGLLLTWLLLLGLLFG). Residues 490–1431 (LIALAEEVRK…RRRRSIAIKP (942 aa)) are Extracellular-facing. At serine 547 the chain carries Phosphoserine; by CK2. Disordered regions lie at residues 564–869 (ENGN…SFIS), 884–996 (DLRG…SSSG), 1158–1178 (DIIG…PGVS), and 1208–1249 (FIIG…SSSV). The segment at 570–1417 (GNPGPKGDMG…KGDKGDKGDQ (848 aa)) is triple-helical region. Low complexity-rich tracts occupy residues 657 to 673 (PRGL…RGPN), 738 to 751 (EPGA…AGPD), and 778 to 799 (PGKP…PGRP). Pro residues-rich tracts occupy residues 823 to 844 (PGPP…PGPA), 889 to 911 (LGPP…PRGP), 937 to 946 (PPGPPGPPGP), 979 to 989 (PPGPPGPPGPP), 1162 to 1174 (PPGP…PRGP), and 1212 to 1221 (PPGPPGPQGP). Asparagine 1230 carries N-linked (GlcNAc...) asparagine glycosylation. Residues 1232-1249 (SWGSSSSARRGTAYSSSV) show a composition bias toward polar residues. N-linked (GlcNAc...) asparagine glycosylation is present at asparagine 1356. The segment at 1366–1431 (RTHGAIPGPP…RRRRSIAIKP (66 aa)) is disordered. Residues 1407–1416 (QKGDKGDKGD) show a composition bias toward basic and acidic residues. The nonhelical region (NC1) stretch occupies residues 1418-1431 (VYTGRRRRSIAIKP). A compositionally biased stretch (basic residues) spans 1421–1431 (GRRRRSIAIKP).

In terms of assembly, homotrimers of alpha 1(XVII)chains. Interacts (via cytoplasmic region) with ITGB4 (via cytoplasmic region). Interacts (via cytoplasmic region) with DST (via N-terminus). Interacts (via N-terminus) with PLEC. Interacts (via cytoplasmic region) with DSP. Post-translationally, the intracellular/endo domain is disulfide-linked. Prolines at the third position of the tripeptide repeating unit (G-X-Y) are hydroxylated in some or all of the chains. In terms of processing, the ectodomain is shedded from the surface of keratinocytes resulting in a 120-kDa soluble form, also named as 120 kDa linear IgA disease antigen homolog. The shedding is mediated by membrane-bound metalloproteases. This cleavage is inhibited by phosphorylation at Ser-547.

It localises to the cell junction. The protein localises to the hemidesmosome. The protein resides in the membrane. Its subcellular location is the secreted. It is found in the extracellular space. It localises to the extracellular matrix. The protein localises to the basement membrane. In terms of biological role, may play a role in the integrity of hemidesmosome and the attachment of basal keratinocytes to the underlying basement membrane. The 120 kDa linear IgA disease antigen homolog is an anchoring filament component involved in dermal-epidermal cohesion. This chain is Collagen alpha-1(XVII) chain (COL17A1), found in Mesocricetus auratus (Golden hamster).